Consider the following 341-residue polypeptide: Adenosine deaminase (341 aa).

Positions 15 and 17 each coordinate Zn(2+). Residues histidine 17, aspartate 19, and glycine 172 each coordinate substrate. Histidine 199 is a binding site for Zn(2+). Glutamate 202 (proton donor) is an active-site residue. Aspartate 279 lines the Zn(2+) pocket.

Belongs to the metallo-dependent hydrolases superfamily. Adenosine and AMP deaminases family. Adenosine deaminase subfamily. The cofactor is Zn(2+).

The catalysed reaction is adenosine + H2O + H(+) = inosine + NH4(+). The enzyme catalyses 2'-deoxyadenosine + H2O + H(+) = 2'-deoxyinosine + NH4(+). Its function is as follows. Catalyzes the hydrolytic deamination of adenosine and 2-deoxyadenosine. The polypeptide is Adenosine deaminase (Streptococcus equi subsp. zooepidemicus (strain MGCS10565)).